The following is a 1038-amino-acid chain: Isoleucine--tRNA ligase (1038 aa).

Residues 48–58 (PTANGKPHVGH) carry the 'HIGH' region motif. Residues 590-594 (KMSKS) carry the 'KMSKS' region motif. K593 provides a ligand contact to ATP.

The protein belongs to the class-I aminoacyl-tRNA synthetase family. IleS type 2 subfamily. In terms of assembly, monomer. Requires Zn(2+) as cofactor.

It is found in the cytoplasm. It catalyses the reaction tRNA(Ile) + L-isoleucine + ATP = L-isoleucyl-tRNA(Ile) + AMP + diphosphate. Functionally, catalyzes the attachment of isoleucine to tRNA(Ile). As IleRS can inadvertently accommodate and process structurally similar amino acids such as valine, to avoid such errors it has two additional distinct tRNA(Ile)-dependent editing activities. One activity is designated as 'pretransfer' editing and involves the hydrolysis of activated Val-AMP. The other activity is designated 'posttransfer' editing and involves deacylation of mischarged Val-tRNA(Ile). This is Isoleucine--tRNA ligase from Clostridium novyi (strain NT).